Consider the following 343-residue polypeptide: Heat-inducible transcription repressor HrcA (343 aa).

This sequence belongs to the HrcA family.

In terms of biological role, negative regulator of class I heat shock genes (grpE-dnaK-dnaJ and groELS operons). Prevents heat-shock induction of these operons. In Mycobacterium ulcerans (strain Agy99), this protein is Heat-inducible transcription repressor HrcA.